Reading from the N-terminus, the 1084-residue chain is Ribonucleoside-diphosphate reductase NrdEB subunit alpha (1084 aa).

Residues Thr-152, 168 to 169, and Gly-197 contribute to the substrate site; that span reads SC. Cysteines 169 and 793 form a disulfide. Asn-379 functions as the Proton acceptor in the catalytic mechanism. Cys-381 functions as the Cysteine radical intermediate in the catalytic mechanism. A DOD-type homing endonuclease domain is found at 503–654; that stretch reads IMGIIAGDGT…VQKLLLNMGV (152 aa). Catalysis depends on Glu-768, which acts as the Proton acceptor. 964–968 serves as a coordination point for substrate; it reads PTGSI.

The protein belongs to the ribonucleoside diphosphate reductase large chain family. As to quaternary structure, tetramer of two alpha and two beta subunits. In terms of processing, this protein undergoes protein self-splicing that involves post-translational excision of the intervening region (intein) followed by peptide ligation.

It catalyses the reaction a 2'-deoxyribonucleoside 5'-diphosphate + [thioredoxin]-disulfide + H2O = a ribonucleoside 5'-diphosphate + [thioredoxin]-dithiol. With respect to regulation, under complex allosteric control mediated by deoxynucleoside triphosphates and ATP binding. The type of nucleotide bound at the specificity site determines substrate preference. It seems probable that ATP makes the enzyme reduce CDP and UDP, dGTP favors ADP reduction and dTTP favors GDP reduction. In terms of biological role, provides the precursors necessary for DNA synthesis. Catalyzes the biosynthesis of deoxyribonucleotides from the corresponding ribonucleotides. The sequence is that of Ribonucleoside-diphosphate reductase NrdEB subunit alpha (nrdEB) from Bacillus subtilis (strain 168).